The sequence spans 316 residues: UDP-N-acetylenolpyruvoylglucosamine reductase (316 aa).

Positions 27–225 (VGGKAERFYR…KTAINALLKK (199 aa)) constitute an FAD-binding PCMH-type domain. R190 is an active-site residue. The active-site Proton donor is S239. Residue E309 is part of the active site.

It belongs to the MurB family. Requires FAD as cofactor.

It is found in the cytoplasm. It carries out the reaction UDP-N-acetyl-alpha-D-muramate + NADP(+) = UDP-N-acetyl-3-O-(1-carboxyvinyl)-alpha-D-glucosamine + NADPH + H(+). The protein operates within cell wall biogenesis; peptidoglycan biosynthesis. Its function is as follows. Cell wall formation. This Coxiella burnetii (strain CbuK_Q154) (Coxiella burnetii (strain Q154)) protein is UDP-N-acetylenolpyruvoylglucosamine reductase.